The following is a 173-amino-acid chain: Endoribonuclease YbeY (173 aa).

Zn(2+)-binding residues include His-126, His-130, and His-136.

This sequence belongs to the endoribonuclease YbeY family. Zn(2+) serves as cofactor.

The protein localises to the cytoplasm. Its function is as follows. Single strand-specific metallo-endoribonuclease involved in late-stage 70S ribosome quality control and in maturation of the 3' terminus of the 16S rRNA. The chain is Endoribonuclease YbeY from Sinorhizobium fredii (strain NBRC 101917 / NGR234).